Here is a 680-residue protein sequence, read N- to C-terminus: Probable potassium transport system protein Kup (680 aa).

The next 12 helical transmembrane spans lie at 16-36 (IAGM…SPLY), 60-80 (ISLV…LIAL), 103-123 (WLVI…MLTP), 150-170 (EVII…KFGT), 177-197 (FGPI…MNLM), 222-242 (VGIL…ALYS), 255-275 (SWPY…VWLL), 302-322 (IPAI…LISG), 351-371 (LYIS…VFYF), 380-400 (AYGL…FHYL), 407-427 (WFLA…FFIA), and 432-452 (FMHG…IMFV).

Belongs to the HAK/KUP transporter (TC 2.A.72) family.

The protein localises to the cell membrane. It carries out the reaction K(+)(in) + H(+)(in) = K(+)(out) + H(+)(out). Its function is as follows. Transport of potassium into the cell. Likely operates as a K(+):H(+) symporter. The sequence is that of Probable potassium transport system protein Kup from Latilactobacillus sakei subsp. sakei (strain 23K) (Lactobacillus sakei subsp. sakei).